The sequence spans 457 residues: Protein translocase subunit SecY (457 aa).

Residues 1–20 (MGVIDVLAAVGERFPAVRKP) are Cytoplasmic-facing. A helical membrane pass occupies residues 21–47 (ERKPTLYRRLAWTGVILVLYFIMSNIP). At 48-59 (LYGIPPQNIGGQ) the chain is on the extracellular side. An intramembrane region (helical) is located at residues 60–67 (VDLQRIIF). A discontinuously helical membrane pass occupies residues 60 to 88 (VDLQRIIFASSAGTLMELGIGPIVTASLI). Residues 68–79 (ASSAGTLMELGI) lie within the membrane without spanning it. The helical intramembrane region spans 80-88 (GPIVTASLI). Over 89 to 109 (IQVLVGAKIIKLDLADPEGRR) the chain is Cytoplasmic. A helical membrane pass occupies residues 110–134 (KFTSAQKVLALAFAALEAVAFTVGG). Residues 135-146 (RYWVGTAIEPGP) are Extracellular-facing. Residues 147–171 (LDYALVSLQLFLGALLVIYFDEVMQ) traverse the membrane as a helical segment. Residues 172 to 178 (KGWGIGS) are Cytoplasmic-facing. A helical transmembrane segment spans residues 179-197 (AISLFILAGVAQGVVWSIF). The Extracellular portion of the chain corresponds to 198–229 (GTIPGVAQDYGLVPAIISNPDLTLLARPNGFP). A helical membrane pass occupies residues 230 to 251 (DLTGFFTTLAAIILLVYLQAMR). The Cytoplasmic portion of the chain corresponds to 252 to 276 (VEIPITSERFKGIRSRVPLQFIYVT). The helical transmembrane segment at 277-298 (NIPILLVGILVSDLLLVQRLLA) threads the bilayer. Topologically, residues 299–332 (DYLGVESRAYQIYSSIVYYLSPPRGVVQSIADPV) are extracellular. The helical transmembrane segment at 333 to 352 (KTAVFIASWTVLSIVFGYMW) threads the bilayer. Topologically, residues 353–395 (VEIAGLNPREQAERLIKGGLAIPGMRSDPRVLERVLRRYIYPL) are cytoplasmic. A helical transmembrane segment spans residues 396–414 (TFLSSLIVAALVIVADIFG). The Extracellular portion of the chain corresponds to 415–417 (AYG). The helical transmembrane segment at 418–432 (TGTGLLLAVGIINQY) threads the bilayer. Topologically, residues 433–457 (YAMITRERALETYPLLRRILGEEVV) are cytoplasmic.

The protein belongs to the SecY/SEC61-alpha family. In terms of assembly, component of the Sec protein translocase complex. Heterotrimer consisting of alpha (SecY), beta (SecG) and gamma (SecE) subunits. The heterotrimers can form oligomers, although 1 heterotrimer is thought to be able to translocate proteins. Interacts with the ribosome. May interact with SecDF, and other proteins may be involved.

The protein resides in the cell membrane. Its function is as follows. The central subunit of the protein translocation channel SecYEG. Consists of two halves formed by TMs 1-5 and 6-10. These two domains form a lateral gate at the front which open onto the bilayer between TMs 2 and 7, and are clamped together by SecE at the back. The channel is closed by both a pore ring composed of hydrophobic SecY resides and a short helix (helix 2A) on the extracellular side of the membrane which forms a plug. The plug probably moves laterally to allow the channel to open. The ring and the pore may move independently. The protein is Protein translocase subunit SecY of Aeropyrum pernix (strain ATCC 700893 / DSM 11879 / JCM 9820 / NBRC 100138 / K1).